Consider the following 344-residue polypeptide: Protein RecA (344 aa).

Residue 66 to 73 (GPESSGKT) coordinates ATP.

Belongs to the RecA family.

The protein resides in the cytoplasm. Functionally, can catalyze the hydrolysis of ATP in the presence of single-stranded DNA, the ATP-dependent uptake of single-stranded DNA by duplex DNA, and the ATP-dependent hybridization of homologous single-stranded DNAs. It interacts with LexA causing its activation and leading to its autocatalytic cleavage. The chain is Protein RecA from Methylobacillus flagellatus.